The chain runs to 198 residues: Endonuclease V (198 aa).

Asp-38 and Asp-101 together coordinate Mg(2+).

It belongs to the endonuclease V family. Mg(2+) serves as cofactor.

The protein localises to the cytoplasm. The enzyme catalyses Endonucleolytic cleavage at apurinic or apyrimidinic sites to products with a 5'-phosphate.. In terms of biological role, DNA repair enzyme involved in the repair of deaminated bases. Selectively cleaves double-stranded DNA at the second phosphodiester bond 3' to a deoxyinosine leaving behind the intact lesion on the nicked DNA. The polypeptide is Endonuclease V (Saccharolobus islandicus (strain M.16.4 / Kamchatka #3) (Sulfolobus islandicus)).